The chain runs to 936 residues: MIIHGFCTGTRHKHKLRKTFIMLGAGLGLFFSVNQNSFANGENYFKLRADSKLINNNIAQDRLFYTLKTGESVAQLSKSQGISVPVIWSLNKHLYSSESEMMKASPGQQIILPLKKLSAEYSTLPILGTAPVVAAADVAGHTKKMSQDTTKSNTSDDKALNYAAQQAASLGSQLQSRSLNGDYAKDTALSMAGNQASSQMQAWLQHYGTAEVNLQSGNNFDGSSLDFLLPFYDTENMLAFGQVGARYIDSRFTANLGAGQRFFLPENMLGYNVFIDQDFSGNNTRLGIGGEYWRDYFKSSVNGYFRMSGWHESYNKKDYDERPANGFDIRFNGYLPSYPALGGKLMYEQYYGDNVALFNADKLYSNPGAVTVGVNYTPIPLVTMGIDYRHGTGNENDLLYSMQFHYQFDKPWSQQIEPQYVNELRTLSGSRYDLVQRNNNIILDYKKQDILSMNIPHNINGTEHSTHKIQLIVKSKYGLERIVWDDSTLRTQGGQIQHSERKAHNDYQAILPAYVQGGSNVYKVTRRAYDRNGNSSNNVQLTITVLSNGQVVDKVGITNFTADKTSAKADNSDTITYTATVKKNGVAQANVPVSFNIVSGTATLSAKSANTNSSGKATVTLKSDKPGQVVVSAKTAEMTSALNANAVIFVDQTKASITEIKVDKTIATADNKDTIEYTVKVMKGGNPISGQKVTFSKDFGTLNKTEATTDQNGYATVKLSSGTPGKAIVSAKVSEVNTEVKAATVEFFAPLSIDGNKVTVIGTGVTGSLPKNWLQYGQVKLQATGGNGKYTWKSSNTKIASVDNSGVITLNEKGSATITVVSGDNQSATYTINTPDNIIIAVDKINRMAYSEAESRCQAISSNLAQSKSVLENIYSKWGAANKYPYYSSSNSLTAWIKQSTSDSASGVSNTYDLVTTNSLTNVKATDKNAFAVCVK.

Positions 1–41 are cleaved as a signal peptide; it reads MIIHGFCTGTRHKHKLRKTFIMLGAGLGLFFSVNQNSFANG. Positions 63 to 112 constitute a LysM domain; it reads LFYTLKTGESVAQLSKSQGISVPVIWSLNKHLYSSESEMMKASPGQQIIL. 2 Big-1 domains span residues 557-650 and 657-748; these read ITNF…VIFV and ITEI…VEFF. The BIG2 domain occupies 780–831; that stretch reads KLQATGGNGKYTWKSSNTKIASVDNSGVITLNEKGSATITVVSGDNQSATYT. A disulfide bridge connects residues Cys-857 and Cys-934.

The protein belongs to the intimin/invasin family.

It is found in the cell outer membrane. Functionally, an inverse autotransporter. The polypeptide is Intimin (eae) (Citrobacter freundii).